The chain runs to 308 residues: PHO85 cyclin-2 (308 aa).

Residues 18–146 (EMVQYLASTT…LLEYFDWDVT (129 aa)) form the Cyclin N-terminal domain. The segment at 248–270 (SPRTYNIDSKHDNKENRPIPTIK) is disordered. Basic and acidic residues predominate over residues 255–264 (DSKHDNKENR).

The protein belongs to the cyclin family. PCL1,2 subfamily. In terms of assembly, forms a cyclin-CDK complex with PHO85. Interacts with RVS167.

The protein resides in the cytoplasm. It localises to the nucleus. Its function is as follows. G1/S-specific cyclin partner of the cyclin-dependent kinase (CDK) PHO85. Essential for the control of the cell cycle at the G1/S (start) transition. Together with cyclin PCL1, positively controls degradation of sphingoid long chain base kinase LCB4. The PCL2-PHO85 cyclin-CDK holoenzyme phosphorylates LCB4, which is required for its ubiquitination and degradation. PCL2-PHO85 also phosphorylates RVS167, linking cyclin-CDK activity with organization of the actin cytoskeleton. This chain is PHO85 cyclin-2 (PCL2), found in Saccharomyces cerevisiae (strain ATCC 204508 / S288c) (Baker's yeast).